We begin with the raw amino-acid sequence, 200 residues long: NADH-quinone oxidoreductase subunit I (200 aa).

4Fe-4S ferredoxin-type domains lie at 73 to 102 (RLLE…METT) and 112 to 141 (LNYS…HGGD). 8 residues coordinate [4Fe-4S] cluster: Cys82, Cys85, Cys88, Cys92, Cys121, Cys124, Cys127, and Cys131.

The protein belongs to the complex I 23 kDa subunit family. In terms of assembly, NDH-1 is composed of 14 different subunits. Subunits NuoA, H, J, K, L, M, N constitute the membrane sector of the complex. Requires [4Fe-4S] cluster as cofactor.

Its subcellular location is the cell inner membrane. The catalysed reaction is a quinone + NADH + 5 H(+)(in) = a quinol + NAD(+) + 4 H(+)(out). Its function is as follows. NDH-1 shuttles electrons from NADH, via FMN and iron-sulfur (Fe-S) centers, to quinones in the respiratory chain. The immediate electron acceptor for the enzyme in this species is believed to be ubiquinone. Couples the redox reaction to proton translocation (for every two electrons transferred, four hydrogen ions are translocated across the cytoplasmic membrane), and thus conserves the redox energy in a proton gradient. The protein is NADH-quinone oxidoreductase subunit I of Campylobacter hominis (strain ATCC BAA-381 / DSM 21671 / CCUG 45161 / LMG 19568 / NCTC 13146 / CH001A).